Here is a 489-residue protein sequence, read N- to C-terminus: ATP synthase subunit beta 1 (489 aa).

An ATP-binding site is contributed by 159–166 (GGAGVGKT). Positions 465–477 (EKSKKAAEDKPKA) are enriched in basic and acidic residues. The tract at residues 465 to 489 (EKSKKAAEDKPKAEEDEDATSLHDA) is disordered.

This sequence belongs to the ATPase alpha/beta chains family. In terms of assembly, F-type ATPases have 2 components, CF(1) - the catalytic core - and CF(0) - the membrane proton channel. CF(1) has five subunits: alpha(3), beta(3), gamma(1), delta(1), epsilon(1). CF(0) has three main subunits: a(1), b(2) and c(9-12). The alpha and beta chains form an alternating ring which encloses part of the gamma chain. CF(1) is attached to CF(0) by a central stalk formed by the gamma and epsilon chains, while a peripheral stalk is formed by the delta and b chains.

It is found in the cell inner membrane. The enzyme catalyses ATP + H2O + 4 H(+)(in) = ADP + phosphate + 5 H(+)(out). Its function is as follows. Produces ATP from ADP in the presence of a proton gradient across the membrane. The catalytic sites are hosted primarily by the beta subunits. In Marinomonas sp. (strain MWYL1), this protein is ATP synthase subunit beta 1.